Here is a 258-residue protein sequence, read N- to C-terminus: Deoxyribose-phosphate aldolase (258 aa).

D101 acts as the Proton donor/acceptor in catalysis. The active-site Schiff-base intermediate with acetaldehyde is K166. K200 (proton donor/acceptor) is an active-site residue.

This sequence belongs to the DeoC/FbaB aldolase family. DeoC type 2 subfamily.

It is found in the cytoplasm. The enzyme catalyses 2-deoxy-D-ribose 5-phosphate = D-glyceraldehyde 3-phosphate + acetaldehyde. It functions in the pathway carbohydrate degradation; 2-deoxy-D-ribose 1-phosphate degradation; D-glyceraldehyde 3-phosphate and acetaldehyde from 2-deoxy-alpha-D-ribose 1-phosphate: step 2/2. Its function is as follows. Catalyzes a reversible aldol reaction between acetaldehyde and D-glyceraldehyde 3-phosphate to generate 2-deoxy-D-ribose 5-phosphate. The chain is Deoxyribose-phosphate aldolase from Haemophilus ducreyi (strain 35000HP / ATCC 700724).